Consider the following 227-residue polypeptide: PKHD-type hydroxylase Bamb_4479 (227 aa).

Positions 80–179 (QVYPPLFNRY…RVASFFWVQS (100 aa)) constitute a Fe2OG dioxygenase domain. The Fe cation site is built by H98, D100, and H160. R170 lines the 2-oxoglutarate pocket.

The cofactor is Fe(2+). L-ascorbate serves as cofactor.

The chain is PKHD-type hydroxylase Bamb_4479 from Burkholderia ambifaria (strain ATCC BAA-244 / DSM 16087 / CCUG 44356 / LMG 19182 / AMMD) (Burkholderia cepacia (strain AMMD)).